The sequence spans 264 residues: MLQFPQFDPVALRLGPLAIHWYGLMYLLAFAFVYLLGRYRIKRGQGGNLTYKDLEDLIFYSVLGVVLGGRLGYVLFYKPGYYLSHPLEIAFLWEGGMSFHGGLIGVILVMLLFARKKGVSFFTISDFIAPLIPLGLGAGRLGNFINGELWGRPSDLPWAMVFPQSGSMLPRHPSQLYELGLEGLVLFALLWWFSSKPRPSGQVSAMFLMGYGAFRFLVEFTREPDNFLGLLAGGMSMGQWLSLPMFLGGLVLFVLTARRSSRQP.

Helical transmembrane passes span 17-37 (LAIH…YLLG), 57-77 (LIFY…VLFY), 89-109 (IAFL…VILV), and 118-138 (GVSF…GLGA). Residue R140 coordinates a 1,2-diacyl-sn-glycero-3-phospho-(1'-sn-glycerol). The next 3 helical transmembrane spans lie at 173–193 (PSQL…LWWF), 201–221 (GQVS…VEFT), and 237–257 (MGQW…VLTA).

This sequence belongs to the Lgt family.

The protein localises to the cell inner membrane. It carries out the reaction L-cysteinyl-[prolipoprotein] + a 1,2-diacyl-sn-glycero-3-phospho-(1'-sn-glycerol) = an S-1,2-diacyl-sn-glyceryl-L-cysteinyl-[prolipoprotein] + sn-glycerol 1-phosphate + H(+). It functions in the pathway protein modification; lipoprotein biosynthesis (diacylglyceryl transfer). Catalyzes the transfer of the diacylglyceryl group from phosphatidylglycerol to the sulfhydryl group of the N-terminal cysteine of a prolipoprotein, the first step in the formation of mature lipoproteins. The sequence is that of Phosphatidylglycerol--prolipoprotein diacylglyceryl transferase from Bordetella avium (strain 197N).